The following is a 399-amino-acid chain: MTQLISIDKEQEEAGMTQATELLDPALKPAETKAKRSSRKKATTAVVEPATTIAPTADVDAIDDEDSVGEDEDAAAKAKAKVRKTYTEDSIRLYLQEIGRIRLLRADEEIELARQIADLLALERIRDELLEQLDRLPSDAEWAAAVDSPLDEFRRRLFRGRRAKDKMVQSNLRLVVSIAKKYMNRGLSFQDLIQEGSLGLIRAAEKFDHEKGYKFSTYATWWIRQAITRAIADQSRTIRLPVHLYETISRIKKTTKLLSQEMGRKPTEEEIATRMEMTIEKLRFIAKSAQLPISLETPIGKEEDSRLGDFIEADGETPEDEVAKNLLREDLEGVLSTLSPRERDVLRLRYGLDDGRMKTLEEIGQLFNVTRERIRQIEAKALRKLRHPNRNSILKEYIR.

Residues Met-1 to Asp-73 are disordered. Residues Asp-60–Asp-73 are compositionally biased toward acidic residues. The sigma-70 factor domain-2 stretch occupies residues Met-167–Thr-237. The Interaction with polymerase core subunit RpoC signature appears at Asp-191–Gln-194. A sigma-70 factor domain-3 region spans residues Glu-246–Glu-321. The sigma-70 factor domain-4 stretch occupies residues Val-334–His-387. A DNA-binding region (H-T-H motif) is located at residues Leu-360 to Ala-379.

The protein belongs to the sigma-70 factor family. RpoD/SigA subfamily. As to quaternary structure, interacts transiently with the RNA polymerase catalytic core.

The protein localises to the cytoplasm. In terms of biological role, sigma factors are initiation factors that promote the attachment of RNA polymerase to specific initiation sites and are then released. This sigma factor is the primary sigma factor during exponential growth. The protein is RNA polymerase sigma factor SigA1 of Synechococcus elongatus (strain ATCC 33912 / PCC 7942 / FACHB-805) (Anacystis nidulans R2).